The primary structure comprises 346 residues: Blue-light-activated histidine kinase 2 (346 aa).

Positions 8–82 constitute a PAS domain; the sequence is HDKEAWGRLP…KAIRNCEEVE (75 aa). At Cys-55 the chain carries S-4a-FMN cysteine. Residues 79-133 form the PAC domain; it reads EEVEETIYNYRADGEGFWNHLLMGPLEDQDEKCRYFVGIQVDMGQSESPDRATEL. One can recognise a Histidine kinase domain in the interval 139 to 334; sequence EVQHRVKNHL…IVNIDIPLSQ (196 aa). Residue His-142 is modified to Phosphohistidine; by autocatalysis.

In terms of processing, FMN binds covalently to cysteine after exposure to blue light and this bond is spontaneously broken in the dark.

It carries out the reaction ATP + protein L-histidine = ADP + protein N-phospho-L-histidine.. Functionally, photosensitive kinase that is involved in increased bacterial virulence upon exposure to light. In Erythrobacter litoralis (strain HTCC2594), this protein is Blue-light-activated histidine kinase 2.